The primary structure comprises 607 residues: CUB and zona pellucida-like domain-containing protein 1 (607 aa).

The first 24 residues, 1–24, serve as a signal peptide directing secretion; that stretch reads MELVRRLMPLTLLILSCLAELTMA. Cys17 and Cys58 are oxidised to a cystine. 2 consecutive CUB domains span residues 25-146 and 154-265; these read EAEG…YFFS and CGGY…YTSI. The Lumenal portion of the chain corresponds to 25–568; the sequence is EAEGNASCTV…EETPNQPFNS (544 aa). N-linked (GlcNAc...) asparagine glycans are attached at residues Asn29, Asn57, and Asn67. 3 cysteine pairs are disulfide-bonded: Cys85–Cys107, Cys154–Cys180, and Cys207–Cys229. Residues 276–519 enclose the ZP domain; the sequence is TCSSDRMRVI…SRCNQGCVSR (244 aa). N-linked (GlcNAc...) asparagine glycosylation is found at Asn394 and Asn419. Cys442 and Cys498 form a disulfide bridge. A helical transmembrane segment spans residues 569 to 589; that stretch reads VHLFSFMVLALNVVTVATITV. Topologically, residues 590-607 are cytoplasmic; the sequence is RHFVNQRADYKYQKLQNY.

As to expression, detected in pancreas and epithelium of ovary. Expressed at higher levels in ovarian tumors than in normal tissue.

The protein localises to the zymogen granule membrane. Its function is as follows. Localized to zymogen granules, where it functions in trypsinogen activation. May indirectly regulate cell motility, cell-cell and cell/extracellular matrix interactions. This Homo sapiens (Human) protein is CUB and zona pellucida-like domain-containing protein 1.